The primary structure comprises 121 residues: Small ribosomal subunit protein bS6m (121 aa).

Belongs to the bacterial ribosomal protein bS6 family. As to quaternary structure, component of the mitochondrial ribosome small subunit (28S) which comprises a 12S rRNA and about 30 distinct proteins.

It is found in the mitochondrion. This chain is Small ribosomal subunit protein bS6m (MRPS6), found in Gallus gallus (Chicken).